The chain runs to 278 residues: Putative cuticle collagen 91 (278 aa).

Disordered stretches follow at residues 84–109 (LAKN…GVDG) and 140–278 (GPAG…SVRQ). Pro residues predominate over residues 89–98 (PPGPPGPPGA). 3 triple-helical region regions span residues 91–120 (GPPG…DGVA), 137–199 (GEAG…NGQR), and 202–264 (GTPG…PGPD). Residues 99–109 (PGAAGEPGVDG) are compositionally biased toward low complexity. Residues 158-167 (GADGQGGAPG) show a composition bias toward gly residues. 2 stretches are compositionally biased toward low complexity: residues 172–228 (EGPA…AGAP) and 236–245 (APGVDGQPGA).

It belongs to the cuticular collagen family. Collagen polypeptide chains are complexed within the cuticle by disulfide bonds and other types of covalent cross-links.

Functionally, nematode cuticles are composed largely of collagen-like proteins. The cuticle functions both as an exoskeleton and as a barrier to protect the worm from its environment. The polypeptide is Putative cuticle collagen 91 (col-91) (Caenorhabditis elegans).